We begin with the raw amino-acid sequence, 363 residues long: Putative replication factor C small subunit L510 (363 aa).

47 to 54 (GPPGTGKT) contributes to the ATP binding site.

Belongs to the activator 1 small subunits family. RfcS subfamily.

Its function is as follows. Part of the RFC clamp loader complex which loads the PCNA sliding clamp onto DNA. This chain is Putative replication factor C small subunit L510, found in Acanthamoeba polyphaga mimivirus (APMV).